The sequence spans 395 residues: Leukosialin (395 aa).

The signal sequence occupies residues 1–19; sequence MALHLLLLFGACWVQVASP. The Extracellular portion of the chain corresponds to 20 to 248; that stretch reads DSLQRTTMLP…TRSPSQESSG (229 aa). Over residues 27–56 the composition is skewed to polar residues; it reads MLPSTPHITAPSTSEAQNASPSVSVGSGTV. Positions 27–245 are disordered; it reads MLPSTPHITA…PITTRSPSQE (219 aa). The span at 73 to 88 shows a compositional bias: low complexity; that stretch reads SLTPLETTELSSLETS. Composition is skewed to polar residues over residues 89–111 and 145–154; these read AGAS…SKTS and TAASTSISKG. Residues 155 to 166 are compositionally biased toward low complexity; that stretch reads TSAPPTTVTTSS. Asn-167 carries an N-linked (GlcNAc...) asparagine glycan. The segment covering 167-196 has biased composition (polar residues); that stretch reads NETSGPSVATTVSSKTSGPPVTTATGSLGP. The span at 205 to 241 shows a compositional bias: low complexity; it reads ATTATSSVESSSVARGTSVSSRKTSTTSTQDPITTRS. Residues 249–271 form a helical membrane-spanning segment; it reads MLLVPMLIALVVVLALVALLLLW. The tract at residues 272–302 is required for interaction with EZR, MSN and RDX and for co-localization to microvilli; it reads RQRQKRRTGALTLSGGGKRNGVVDAWAGPAR. At 272–395 the chain is on the cytoplasmic side; the sequence is RQRQKRRTGA…AKDEAAPQSL (124 aa). Residues 276 to 290 carry the Nuclear localization signal motif; sequence KRRTGALTLSGGGKR. Phosphoserine is present on residues Ser-285 and Ser-328. The tract at residues 303 to 395 is disordered; sequence VPDEEATTTS…AKDEAAPQSL (93 aa). The segment covering 327–338 has biased composition (polar residues); it reads GSGQRPTLTTFF. Position 333 is a phosphothreonine (Thr-333). Ser-339 and Ser-343 each carry phosphoserine. Residue Ser-347 is modified to Phosphoserine; by PKC/PRKCQ. Ser-371 carries the post-translational modification Phosphoserine. At Thr-378 the chain carries Phosphothreonine. The span at 385 to 395 shows a compositional bias: basic and acidic residues; it reads QAKDEAAPQSL.

As to quaternary structure, interacts with SIGLEC1. Interacts with isoform 2 of HIPK2. Interacts with CTNNB1. Interacts with RDX (via FERM domain). Interacts with EZR. Interacts with MSN. Post-translationally, phosphorylation at Ser-347 is regulated by chemokines, requires its association with ERM proteins (EZR, RDX and MSN) and is essential for its function in the regulation of T-cell trafficking to lymph nodes. In terms of processing, has a high content of sialic acid and O-linked carbohydrate structures. Cleavage by CTSG releases its extracellular domain and triggers its intramembrane proteolysis by gamma-secretase releasing the CD43 cytoplasmic tail chain (CD43-ct) which translocates to the nucleus. Post-translationally, sumoylated. As to expression, cell surface of thymocytes, T-lymphocytes, neutrophils, plasma cells and myelomas.

The protein localises to the membrane. Its subcellular location is the cell projection. It is found in the microvillus. The protein resides in the uropodium. It localises to the nucleus. The protein localises to the PML body. Its function is as follows. Predominant cell surface sialoprotein of leukocytes which regulates multiple T-cell functions, including T-cell activation, proliferation, differentiation, trafficking and migration. Positively regulates T-cell trafficking to lymph-nodes via its association with ERM proteins (EZR, RDX and MSN). Negatively regulates Th2 cell differentiation and predisposes the differentiation of T-cells towards a Th1 lineage commitment. Promotes the expression of IFN-gamma by T-cells during T-cell receptor (TCR) activation of naive cells and induces the expression of IFN-gamma by CD4(+) T-cells and to a lesser extent by CD8(+) T-cells. Plays a role in preparing T-cells for cytokine sensing and differentiation into effector cells by inducing the expression of cytokine receptors IFNGR and IL4R, promoting IFNGR and IL4R signaling and by mediating the clustering of IFNGR with TCR. Acts as a major E-selectin ligand responsible for Th17 cell rolling on activated vasculature and recruitment during inflammation. Mediates Th17 cells, but not Th1 cells, adhesion to E-selectin. Acts as a T-cell counter-receptor for SIGLEC1. In terms of biological role, protects cells from apoptotic signals, promoting cell survival. This chain is Leukosialin (Spn), found in Mus musculus (Mouse).